The sequence spans 373 residues: 4-hydroxy-3-methylbut-2-en-1-yl diphosphate synthase (flavodoxin) (373 aa).

Residues Cys-270, Cys-273, Cys-305, and Glu-312 each contribute to the [4Fe-4S] cluster site.

The protein belongs to the IspG family. Requires [4Fe-4S] cluster as cofactor.

It carries out the reaction (2E)-4-hydroxy-3-methylbut-2-enyl diphosphate + oxidized [flavodoxin] + H2O + 2 H(+) = 2-C-methyl-D-erythritol 2,4-cyclic diphosphate + reduced [flavodoxin]. It participates in isoprenoid biosynthesis; isopentenyl diphosphate biosynthesis via DXP pathway; isopentenyl diphosphate from 1-deoxy-D-xylulose 5-phosphate: step 5/6. Its function is as follows. Converts 2C-methyl-D-erythritol 2,4-cyclodiphosphate (ME-2,4cPP) into 1-hydroxy-2-methyl-2-(E)-butenyl 4-diphosphate. The protein is 4-hydroxy-3-methylbut-2-en-1-yl diphosphate synthase (flavodoxin) of Serratia proteamaculans (strain 568).